We begin with the raw amino-acid sequence, 130 residues long: HTH-type transcriptional repressor YtrA (130 aa).

The 69-residue stretch at 10–78 (TPIYEQIIQQ…RGRGTYISEN (69 aa)) folds into the HTH gntR-type domain. The H-T-H motif DNA-binding region spans 38–57 (VRELATIIIANPNTVSKAYK).

Functionally, negatively regulates ABC transporter complex ytrBCDEF that plays a role in acetoin utilization during stationary phase and sporulation. The sequence is that of HTH-type transcriptional repressor YtrA (ytrA) from Bacillus subtilis (strain 168).